Consider the following 256-residue polypeptide: MIKRVNKLVLGISLLFLVISITAGCGMGKEAEIKKSFEKTLSMYPIKNLEDLYDKEGYRDDQFDKNDKGTWIVNSQMAIQNKGEALKIKGMLLKIDRNTRSAKGFYYTNEIKTEKYEVAQDNQKKYPVKMINNKFISTEEVKEENIKKEIENFKFFAQYSNFKDLMNYKDGDISYNPEVPSYSAQYQLTNDDYNVKQLRKRYDIPTNKAPKLLLKGTGNLKGSSVGYKKIEFTFLENKNENIYFTDSLHLKPSEDK.

The N-terminal stretch at 1–24 is a signal peptide; it reads MIKRVNKLVLGISLLFLVISITAG. Residue C25 is the site of N-palmitoyl cysteine attachment. The S-diacylglycerol cysteine moiety is linked to residue C25.

It belongs to the staphylococcal tandem lipoprotein family.

It localises to the cell membrane. This is an uncharacterized protein from Staphylococcus aureus (strain MW2).